Here is a 448-residue protein sequence, read N- to C-terminus: Signal recognition particle 54 kDa protein (448 aa).

GTP is bound by residues 107–114 (GIQGSGKT), 189–193 (DTAGR), and 247–250 (TKLD).

Belongs to the GTP-binding SRP family. SRP54 subfamily. As to quaternary structure, part of the signal recognition particle protein translocation system, which is composed of SRP and FtsY. Archaeal SRP consists of a 7S RNA molecule of 300 nucleotides and two protein subunits: SRP54 and SRP19.

The protein resides in the cytoplasm. It catalyses the reaction GTP + H2O = GDP + phosphate + H(+). Involved in targeting and insertion of nascent membrane proteins into the cytoplasmic membrane. Binds to the hydrophobic signal sequence of the ribosome-nascent chain (RNC) as it emerges from the ribosomes. The SRP-RNC complex is then targeted to the cytoplasmic membrane where it interacts with the SRP receptor FtsY. This is Signal recognition particle 54 kDa protein from Thermococcus gammatolerans (strain DSM 15229 / JCM 11827 / EJ3).